Here is a 554-residue protein sequence, read N- to C-terminus: DNA ligase B (554 aa).

Lysine 122 functions as the N6-AMP-lysine intermediate in the catalytic mechanism.

The protein belongs to the NAD-dependent DNA ligase family. LigB subfamily.

It carries out the reaction NAD(+) + (deoxyribonucleotide)n-3'-hydroxyl + 5'-phospho-(deoxyribonucleotide)m = (deoxyribonucleotide)n+m + AMP + beta-nicotinamide D-nucleotide.. In terms of biological role, catalyzes the formation of phosphodiester linkages between 5'-phosphoryl and 3'-hydroxyl groups in double-stranded DNA using NAD as a coenzyme and as the energy source for the reaction. The sequence is that of DNA ligase B from Pseudomonas fluorescens (strain SBW25).